The chain runs to 175 residues: Ribosome maturation factor RimM (175 aa).

A PRC barrel domain is found at 95–175; it reads EEGDYYWHDL…TITVDWDAGF (81 aa).

Belongs to the RimM family. Binds ribosomal protein uS19.

It is found in the cytoplasm. Its function is as follows. An accessory protein needed during the final step in the assembly of 30S ribosomal subunit, possibly for assembly of the head region. Essential for efficient processing of 16S rRNA. May be needed both before and after RbfA during the maturation of 16S rRNA. It has affinity for free ribosomal 30S subunits but not for 70S ribosomes. This Glaesserella parasuis serovar 5 (strain SH0165) (Haemophilus parasuis) protein is Ribosome maturation factor RimM.